The sequence spans 401 residues: Large ribosomal subunit protein uL3 (401 aa).

Residues 1-22 form a disordered region; the sequence is MSHRKFSAPRHGHMGFTPKKRS.

It belongs to the universal ribosomal protein uL3 family.

It is found in the cytoplasm. The L3 protein is a component of the large subunit of cytoplasmic ribosomes. This is Large ribosomal subunit protein uL3 (rpl-3) from Caenorhabditis elegans.